Reading from the N-terminus, the 814-residue chain is Lon protease (814 aa).

A disordered region spans residues 1–20 (MANEAHNIEHTDPEFRDDSA). One can recognise a Lon N-terminal domain in the interval 25-219 (LPLLPVRDTV…KINQHLAKEL (195 aa)). 372-379 (GPPGVGKT) contacts ATP. In terms of domain architecture, Lon proteolytic spans 610–792 (TKRAGVVVGL…DEVLEIALPS (183 aa)). Active-site residues include Ser-697 and Lys-740.

The protein belongs to the peptidase S16 family. Homohexamer. Organized in a ring with a central cavity.

It localises to the cytoplasm. The catalysed reaction is Hydrolysis of proteins in presence of ATP.. Its function is as follows. ATP-dependent serine protease that mediates the selective degradation of mutant and abnormal proteins as well as certain short-lived regulatory proteins. Required for cellular homeostasis and for survival from DNA damage and developmental changes induced by stress. Degrades polypeptides processively to yield small peptide fragments that are 5 to 10 amino acids long. Binds to DNA in a double-stranded, site-specific manner. The protein is Lon protease of Koribacter versatilis (strain Ellin345).